Reading from the N-terminus, the 220-residue chain is MGRRPARCYRQIKNKPYPKSRYCRGVPDPKIRIYDVGMKKKGVDEFPFCVHLVSWEKENVSSEALEAARIACNKYMTKYAGKDAFHLRVRVHPFHVLRINKMLSCAGADRLQTGMRGAFGKPQGTCARVSIGQVLLSVRCKDGNSHHAQEALRRAKFKFPARQKIIVSRKWGFTKFNRTDYIKWKSQNRILPDGVNAKLLGCHGPLANRQPGKAFINACT.

The protein belongs to the universal ribosomal protein uL16 family. In terms of assembly, component of the small ribosomal subunit. Mature ribosomes consist of a small (40S) and a large (60S) subunit. The 40S subunit contains about 33 different proteins and 1 molecule of RNA (18S). The 60S subunit contains about 49 different proteins and 3 molecules of RNA (25S, 5.8S and 5S).

This chain is Large ribosomal subunit protein uL16 (RPL10), found in Vitis riparia (Frost grape).